A 420-amino-acid chain; its full sequence is Glucose-1-phosphate adenylyltransferase (420 aa).

Alpha-D-glucose 1-phosphate is bound by residues tyrosine 107, glycine 172, 187–188 (EK), and serine 205.

This sequence belongs to the bacterial/plant glucose-1-phosphate adenylyltransferase family. Homotetramer.

The catalysed reaction is alpha-D-glucose 1-phosphate + ATP + H(+) = ADP-alpha-D-glucose + diphosphate. It functions in the pathway glycan biosynthesis; glycogen biosynthesis. Its function is as follows. Involved in the biosynthesis of ADP-glucose, a building block required for the elongation reactions to produce glycogen. Catalyzes the reaction between ATP and alpha-D-glucose 1-phosphate (G1P) to produce pyrophosphate and ADP-Glc. The protein is Glucose-1-phosphate adenylyltransferase of Rhizobium etli (strain ATCC 51251 / DSM 11541 / JCM 21823 / NBRC 15573 / CFN 42).